A 249-amino-acid polypeptide reads, in one-letter code: Tetrahydromethanopterin S-methyltransferase subunit D (249 aa).

Helical transmembrane passes span 9–29, 47–67, 75–95, 138–158, 183–203, and 224–244; these read ILWL…VHFV, GTVQ…GFMM, LILA…MIVG, VSFV…ALVY, LVGI…VIPS, and AVIS…IAIS.

This sequence belongs to the MtrD family. The complex is composed of 8 subunits; MtrA, MtrB, MtrC, MtrD, MtrE, MtrF, MtrG and MtrH.

It is found in the cell membrane. It carries out the reaction 5-methyl-5,6,7,8-tetrahydromethanopterin + coenzyme M + 2 Na(+)(in) = 5,6,7,8-tetrahydromethanopterin + methyl-coenzyme M + 2 Na(+)(out). It functions in the pathway one-carbon metabolism; methanogenesis from CO(2); methyl-coenzyme M from 5,10-methylene-5,6,7,8-tetrahydromethanopterin: step 2/2. Functionally, part of a complex that catalyzes the formation of methyl-coenzyme M and tetrahydromethanopterin from coenzyme M and methyl-tetrahydromethanopterin. This is an energy-conserving, sodium-ion translocating step. The polypeptide is Tetrahydromethanopterin S-methyltransferase subunit D (Methanosarcina acetivorans (strain ATCC 35395 / DSM 2834 / JCM 12185 / C2A)).